The primary structure comprises 484 residues: Aspartyl/glutamyl-tRNA(Asn/Gln) amidotransferase subunit B (484 aa).

Belongs to the GatB/GatE family. GatB subfamily. As to quaternary structure, heterotrimer of A, B and C subunits.

The catalysed reaction is L-glutamyl-tRNA(Gln) + L-glutamine + ATP + H2O = L-glutaminyl-tRNA(Gln) + L-glutamate + ADP + phosphate + H(+). It carries out the reaction L-aspartyl-tRNA(Asn) + L-glutamine + ATP + H2O = L-asparaginyl-tRNA(Asn) + L-glutamate + ADP + phosphate + 2 H(+). In terms of biological role, allows the formation of correctly charged Asn-tRNA(Asn) or Gln-tRNA(Gln) through the transamidation of misacylated Asp-tRNA(Asn) or Glu-tRNA(Gln) in organisms which lack either or both of asparaginyl-tRNA or glutaminyl-tRNA synthetases. The reaction takes place in the presence of glutamine and ATP through an activated phospho-Asp-tRNA(Asn) or phospho-Glu-tRNA(Gln). This is Aspartyl/glutamyl-tRNA(Asn/Gln) amidotransferase subunit B from Anaeromyxobacter dehalogenans (strain 2CP-1 / ATCC BAA-258).